Reading from the N-terminus, the 457-residue chain is Chromogranin-A (457 aa).

The N-terminal stretch at 1 to 18 (MRSAAVLALLLCAGQVTA) is a signal peptide. A disulfide bond links C35 and C56. An O-glycosylated at one site only in cerebrospinal fluid region spans residues 41–59 (SDTLSKPSPMPVSQECFET). The segment at 88–440 (KERAHQQKKH…DQELESLSAI (353 aa)) is disordered. The span at 116–144 (ELKEAVEEPSSKDVMEKREDSKEAEKSGE) shows a compositional bias: basic and acidic residues. S142 carries the post-translational modification Phosphoserine. Residues 171 to 180 (GEEEEEEEEA) are compositionally biased toward acidic residues. Residues T181 and T183 are each glycosylated (O-linked (GalNAc...) threonine). The interval 181 to 191 (TNTHPPASLPS) is O-glycosylated at one site only in cerebrospinal fluid. The span at 182–191 (NTHPPASLPS) shows a compositional bias: polar residues. Y194 bears the Phosphotyrosine mark. S203 and S218 each carry phosphoserine. Positions 229–249 (EEEEEEEEAEAGEEAVPEEEG) are enriched in acidic residues. T251 carries O-linked (GalNAc...) threonine glycosylation. Basic and acidic residues-rich tracts occupy residues 263-272 (KEIRKGESRS) and 291-303 (PEGK…SQQK). S270 and S300 each carry phosphoserine. At G319 the chain carries Glycine amide. Phosphoserine is present on residues S322, S333, and S371. The span at 330-360 (ERLSKEWEDSKRWSKMDQLAKELTAEKRLEG) shows a compositional bias: basic and acidic residues. M372 carries the post-translational modification Methionine sulfoxide. Phosphoserine occurs at positions 398, 402, 424, and 438. Over residues 414–431 (YPEEKKEEEGSANRRPED) the composition is skewed to basic and acidic residues. S424 carries O-linked (Xyl...) (chondroitin sulfate) serine glycosylation. Residue R456 is modified to Arginine amide.

It belongs to the chromogranin/secretogranin protein family. Self-interacts; self-assembly is promoted in vitro by chondroitin sulfate attachment which occurs at mildly acidic pH conditions. Interacts with SCG3. Interacts with ITPR1 in the secretory granules. Post-translationally, sulfated on tyrosine residues and/or contains sulfated glycans. In terms of processing, O-glycosylated with core 1 or possibly core 8 glycans. Contains chondroitin sulfate (CS); CS attachment is pH-dependent, being observed at mildly acidic conditions of pH 5 but not at neutral pH, and promotes self-assembly in vitro. Proteolytic processing gives rise to an additional longer form of catestatin (residues 358-390) which displays a less potent catecholamine release-inhibitory activity. Plasmin-mediated proteolytic processing can give rise to additional shorter and longer forms of catestatin peptides. Detected in cerebrospinal fluid (at protein level). Detected in urine (at protein level). As to expression, found in the brain.

It localises to the secreted. The protein localises to the cytoplasmic vesicle. Its subcellular location is the secretory vesicle. It is found in the neuronal dense core vesicle. Strongly inhibits glucose induced insulin release from the pancreas. Its function is as follows. Inhibits catecholamine release from chromaffin cells and noradrenergic neurons by acting as a non-competitive nicotinic cholinergic antagonist. Displays antibacterial activity against Gram-positive bacteria S.aureus and M.luteus, and Gram-negative bacteria E.coli and P.aeruginosa. Can induce mast cell migration, degranulation and production of cytokines and chemokines. Acts as a potent scavenger of free radicals in vitro. May play a role in the regulation of cardiac function and blood pressure. Functionally, regulates granule biogenesis in endocrine cells by up-regulating the transcription of protease nexin 1 (SERPINE2) via a cAMP-PKA-SP1 pathway. This leads to inhibition of granule protein degradation in the Golgi complex which in turn promotes granule formation. This chain is Chromogranin-A (CHGA), found in Homo sapiens (Human).